Reading from the N-terminus, the 391-residue chain is Formate-dependent phosphoribosylglycinamide formyltransferase (391 aa).

Residues 18-19 (EL) and Glu-78 contribute to the N(1)-(5-phospho-beta-D-ribosyl)glycinamide site. ATP is bound by residues Arg-110, Lys-151, 156–161 (SSGKGQ), 191–194 (EEFI), and Glu-199. The 191-residue stretch at 115-305 (ELAHEELGIR…EFELHLRAIL (191 aa)) folds into the ATP-grasp domain. Mg(2+)-binding residues include Glu-264 and Glu-276. N(1)-(5-phospho-beta-D-ribosyl)glycinamide-binding positions include Asp-283, Lys-353, and 360-361 (RR).

It belongs to the PurK/PurT family. Homodimer.

The catalysed reaction is N(1)-(5-phospho-beta-D-ribosyl)glycinamide + formate + ATP = N(2)-formyl-N(1)-(5-phospho-beta-D-ribosyl)glycinamide + ADP + phosphate + H(+). The protein operates within purine metabolism; IMP biosynthesis via de novo pathway; N(2)-formyl-N(1)-(5-phospho-D-ribosyl)glycinamide from N(1)-(5-phospho-D-ribosyl)glycinamide (formate route): step 1/1. Involved in the de novo purine biosynthesis. Catalyzes the transfer of formate to 5-phospho-ribosyl-glycinamide (GAR), producing 5-phospho-ribosyl-N-formylglycinamide (FGAR). Formate is provided by PurU via hydrolysis of 10-formyl-tetrahydrofolate. This chain is Formate-dependent phosphoribosylglycinamide formyltransferase, found in Trichormus variabilis (strain ATCC 29413 / PCC 7937) (Anabaena variabilis).